Consider the following 356-residue polypeptide: MSDEKQKKSVLEKALKRIEENFGKGSIMILGDETQVQPVEVIPTGSLAIDIATGVGGYPRGRIVEIFGQESSGKTTLALHAIAEAQKMGGVAAFIDAEHALDPVYAKNLGVDLKSLLISQPDHGEQALEIVDELVRSGVVDLIVVDSVAALVPRAEIEGAMGDMQVGLQARLMSQALRKIAGSVNKSKAVVIFTNQIRMKIGVMFGSPETTTGGLALKFYATMRMEVRRGEPIKEGKDVIGNVISVKIVKNKVAPPFKTAQTYIIYGKGIDREYELFNIAVEESMVERKGSWYYYTTLKGEEVSLGQGSSNAVQFLKDNPEIAGEIERRIREKYGLLSVEKEEQKKEEKSSDEEAS.

68–75 (GQESSGKT) serves as a coordination point for ATP.

This sequence belongs to the RecA family.

The protein resides in the cytoplasm. Can catalyze the hydrolysis of ATP in the presence of single-stranded DNA, the ATP-dependent uptake of single-stranded DNA by duplex DNA, and the ATP-dependent hybridization of homologous single-stranded DNAs. It interacts with LexA causing its activation and leading to its autocatalytic cleavage. The protein is Protein RecA of Thermotoga petrophila (strain ATCC BAA-488 / DSM 13995 / JCM 10881 / RKU-1).